The sequence spans 616 residues: Dihydroxy-acid dehydratase (616 aa).

Residue Asp-81 participates in Mg(2+) binding. Cys-122 is a [2Fe-2S] cluster binding site. Asp-123 and Lys-124 together coordinate Mg(2+). Lys-124 bears the N6-carboxylysine mark. Cys-195 lines the [2Fe-2S] cluster pocket. Glu-491 serves as a coordination point for Mg(2+). Catalysis depends on Ser-517, which acts as the Proton acceptor.

Belongs to the IlvD/Edd family. In terms of assembly, homodimer. Requires [2Fe-2S] cluster as cofactor. Mg(2+) serves as cofactor.

The catalysed reaction is (2R)-2,3-dihydroxy-3-methylbutanoate = 3-methyl-2-oxobutanoate + H2O. It catalyses the reaction (2R,3R)-2,3-dihydroxy-3-methylpentanoate = (S)-3-methyl-2-oxopentanoate + H2O. The protein operates within amino-acid biosynthesis; L-isoleucine biosynthesis; L-isoleucine from 2-oxobutanoate: step 3/4. Its pathway is amino-acid biosynthesis; L-valine biosynthesis; L-valine from pyruvate: step 3/4. Functionally, functions in the biosynthesis of branched-chain amino acids. Catalyzes the dehydration of (2R,3R)-2,3-dihydroxy-3-methylpentanoate (2,3-dihydroxy-3-methylvalerate) into 2-oxo-3-methylpentanoate (2-oxo-3-methylvalerate) and of (2R)-2,3-dihydroxy-3-methylbutanoate (2,3-dihydroxyisovalerate) into 2-oxo-3-methylbutanoate (2-oxoisovalerate), the penultimate precursor to L-isoleucine and L-valine, respectively. The protein is Dihydroxy-acid dehydratase of Salmonella paratyphi A (strain ATCC 9150 / SARB42).